A 228-amino-acid polypeptide reads, in one-letter code: Phosphoribosylformylglycinamidine synthase subunit PurQ (228 aa).

The 224-residue stretch at 3-226 (FAVIVFPGSN…VNYWRETHVV (224 aa)) folds into the Glutamine amidotransferase type-1 domain. Cysteine 86 acts as the Nucleophile in catalysis. Active-site residues include histidine 195 and glutamate 197.

As to quaternary structure, part of the FGAM synthase complex composed of 1 PurL, 1 PurQ and 2 PurS subunits.

It localises to the cytoplasm. It catalyses the reaction N(2)-formyl-N(1)-(5-phospho-beta-D-ribosyl)glycinamide + L-glutamine + ATP + H2O = 2-formamido-N(1)-(5-O-phospho-beta-D-ribosyl)acetamidine + L-glutamate + ADP + phosphate + H(+). The catalysed reaction is L-glutamine + H2O = L-glutamate + NH4(+). It participates in purine metabolism; IMP biosynthesis via de novo pathway; 5-amino-1-(5-phospho-D-ribosyl)imidazole from N(2)-formyl-N(1)-(5-phospho-D-ribosyl)glycinamide: step 1/2. Its function is as follows. Part of the phosphoribosylformylglycinamidine synthase complex involved in the purines biosynthetic pathway. Catalyzes the ATP-dependent conversion of formylglycinamide ribonucleotide (FGAR) and glutamine to yield formylglycinamidine ribonucleotide (FGAM) and glutamate. The FGAM synthase complex is composed of three subunits. PurQ produces an ammonia molecule by converting glutamine to glutamate. PurL transfers the ammonia molecule to FGAR to form FGAM in an ATP-dependent manner. PurS interacts with PurQ and PurL and is thought to assist in the transfer of the ammonia molecule from PurQ to PurL. The protein is Phosphoribosylformylglycinamidine synthase subunit PurQ of Geobacillus thermodenitrificans (strain NG80-2).